The following is a 431-amino-acid chain: Bone morphogenetic protein 7 (431 aa).

The signal sequence occupies residues 1–29; it reads MHVRSLRAAAPHSFVALWAPLFLLRSALA. The propeptide occupies 30 to 292; it reads DFSLDNEVHS…ATEVHFRSIR (263 aa). Asn187, Asn302, Asn321, and Asn372 each carry an N-linked (GlcNAc...) asparagine glycan. Positions 291–311 are disordered; that stretch reads IRSTGSKQRSQNRSKTPKNQE. Cystine bridges form between Cys330–Cys396, Cys359–Cys428, and Cys363–Cys430.

It belongs to the TGF-beta family. Homodimer; disulfide-linked. Interacts with SOSTDC1. Interacts with TWSG1. Interacts with FBN1 (via N-terminal domain) and FBN2. Interacts with type I receptor ACVR1. Interacts with type II receptor ACVR2A. Interacts with NOG; this interaction inhibits canonical BMP signaling. Interacts with SCUBE3. Interacts with ERFE; the interaction inhibits BMP-induced transcription of HAMP. Interacts with TGFBR3. In terms of processing, several N-termini starting at positions 293, 300, 315 and 316 have been identified by direct sequencing resulting in secretion of different mature forms. In terms of tissue distribution, expressed in the kidney and bladder. Lower levels seen in the brain.

The protein localises to the secreted. In terms of biological role, growth factor of the TGF-beta superfamily that plays important role in various biological processes, including embryogenesis, hematopoiesis, neurogenesis and skeletal morphogenesis. Initiates the canonical BMP signaling cascade by associating with type I receptor ACVR1 and type II receptor ACVR2A. Once all three components are bound together in a complex at the cell surface, ACVR2A phosphorylates and activates ACVR1. In turn, ACVR1 propagates signal by phosphorylating SMAD1/5/8 that travel to the nucleus and act as activators and repressors of transcription of target genes. For specific functions such as growth cone collapse in developing spinal neurons and chemotaxis of monocytes, also uses BMPR2 as type II receptor. Can also signal through non-canonical pathways such as P38 MAP kinase signaling cascade that promotes brown adipocyte differentiation through activation of target genes, including members of the SOX family of transcription factors. Promotes the expression of HAMP, this is repressed by its interaction with ERFE. The sequence is that of Bone morphogenetic protein 7 (BMP7) from Homo sapiens (Human).